Reading from the N-terminus, the 94-residue chain is PqqA binding protein (94 aa).

It belongs to the PqqD family. In terms of assembly, monomer. Interacts with PqqE.

The protein operates within cofactor biosynthesis; pyrroloquinoline quinone biosynthesis. Its function is as follows. Functions as a PqqA binding protein and presents PqqA to PqqE, in the pyrroloquinoline quinone (PQQ) biosynthetic pathway. In Pseudomonas syringae pv. syringae (strain B728a), this protein is PqqA binding protein.